The sequence spans 507 residues: Serine/threonine-protein kinase BSK11 (507 aa).

Residue Gly2 is the site of N-myristoyl glycine attachment. Residues 16-26 show a composition bias toward basic and acidic residues; sequence DKKITSDDLSG. The interval 16–44 is disordered; the sequence is DKKITSDDLSGRRGKGAKRGNRHRHANIN. Positions 27–41 are enriched in basic residues; it reads RRGKGAKRGNRHRHA. A Protein kinase domain is found at 75-332; sequence NAVVSVCSDQ…GDIISVITTL (258 aa). Residues 81–89 and Lys106 each bind ATP; that span reads CSDQEPNLV. Asp200 serves as the catalytic Proton acceptor.

The protein belongs to the protein kinase superfamily. Ser/Thr protein kinase family. Interacts with BRI1, ASK7/BIN2, BSK1, BSK6 and BSK8. Post-translationally, phosphorylated by BRI1, ASK7/BIN2 and ASK9/BIL2.

Its subcellular location is the cell membrane. It catalyses the reaction L-seryl-[protein] + ATP = O-phospho-L-seryl-[protein] + ADP + H(+). It carries out the reaction L-threonyl-[protein] + ATP = O-phospho-L-threonyl-[protein] + ADP + H(+). Its function is as follows. Probable serine/threonine kinase that acts as a positive regulator of brassinosteroid (BR) signaling downstream of the receptor kinase BRI1. This is Serine/threonine-protein kinase BSK11 from Arabidopsis thaliana (Mouse-ear cress).